The chain runs to 344 residues: Putative NAD(P)H nitroreductase MT3217 (344 aa).

FMN-binding positions include 40-44 (QPWRW) and Arg-326.

It belongs to the nitroreductase family. As to quaternary structure, interacts with human TLR2. FMN is required as a cofactor.

Functionally, stimulates pro-inflammatory cytokine expression via TLR2 signaling pathway. Activation of TLR2 results in the phosphorylation and activation of NF-kappa-B. Also induces TLR2 expression. May influence the innate immune responses to facilitate the survival of M.tuberculosis in the granulomatous microenvironment. The protein is Putative NAD(P)H nitroreductase MT3217 of Mycobacterium tuberculosis (strain CDC 1551 / Oshkosh).